A 286-amino-acid polypeptide reads, in one-letter code: Pheromone receptor transcription factor (286 aa).

At Ser-2 the chain carries N-acetylserine. Phosphoserine is present on Ser-2. In terms of domain architecture, MADS-box spans 18 to 72; sequence RRKIEIKFIENKTRRHVTFSKRKHGIMKKAFELSVLTGTQVLLLVVSETGLVYTF. The span at 97–119 shows a compositional bias: acidic residues; it reads PDDEEEDEEEDGDDDDDDDDDGN. Residues 97–137 form a disordered region; sequence PDDEEEDEEEDGDDDDDDDDDGNDMQRQQPQQQQPQQQQQV. Over residues 122 to 136 the composition is skewed to low complexity; that stretch reads QRQQPQQQQPQQQQQ. Position 144 is a phosphoserine (Ser-144). The tract at residues 167-264 is disordered; that stretch reads LGGANPNQNS…QQAFANAASP (98 aa). The segment covering 171–246 has biased composition (low complexity); the sequence is NPNQNSMIQQ…QQQQQQQQQP (76 aa).

In terms of assembly, homodimer. Binds DNA with a high specificity in complex with mating-type protein ALPHA1. Also binds DNA with a high specificity as a heterotetramer consisting of an ALPHA2 dimer and an MCM1 dimer. Interacts with YHP1 and YOX1, possibly leading to its inactivation. Interacts with ARG80 and ARG82.

It localises to the nucleus. Functionally, transcription factor required for the efficient replication of minichromosomes and the transcriptional regulation of early cell cycle genes. Activates transcription of ECB-dependent genes during the G1/M phase. Genes that contain a ECB (early cell box) element in their transcription regulatory region are transcribed only during G1/M phases. Interacts with the alpha-2 repressor or with the alpha-1 activator thereby regulating the expression of mating-type-specific genes. With ARG80, ARG81 and ARG82, coordinates the expression of arginine anabolic and catabolic genes in response to arginine. The sequence is that of Pheromone receptor transcription factor (MCM1) from Saccharomyces cerevisiae (strain ATCC 204508 / S288c) (Baker's yeast).